A 405-amino-acid polypeptide reads, in one-letter code: Growth/differentiation factor 11 (405 aa).

The N-terminal stretch at 1 to 24 (MVLAAPLLLGFLLLALELRPRGEA) is a signal peptide. A propeptide spanning residues 25–296 (AEGPAAAAAA…VLENTKRSRR (272 aa)) is cleaved from the precursor. A glycan (N-linked (GlcNAc...) asparagine) is linked at asparagine 92. Disulfide bonds link cysteine 302-cysteine 312, cysteine 311-cysteine 370, cysteine 339-cysteine 402, and cysteine 343-cysteine 404.

It belongs to the TGF-beta family. Homodimer; disulfide-linked. Interacts directly with ACVR2B. Interacts directly with ACVR2A. Interacts with ACVR1B, TGFBR1 and ACVR1C in an ACVR2B-dependent manner. Interacts with FST isoform 2/FS288. Post-translationally, synthesized as large precursor molecule that undergoes proteolytic cleavage by furin-like proteases. This produces an inactive form consisting of the mature C-terminal portion non-covalently bound to its cleaved N-terminal propeptide. Activation of the mature form requires additional cleavage of the propeptide by a tolloid-like metalloproteinase.

Its subcellular location is the secreted. Secreted signal that acts globally to regulate anterior/posterior axial patterning during development. May play critical roles in patterning both mesodermal and neural tissues. It is required for proper vertebral patterning and orofacial development. Signals through activin receptors type-2, ACVR2A and ACVR2B, and activin receptors type-1, ACVR1B, ACVR1C and TGFBR1 leading to the phosphorylation of SMAD2 and SMAD3. In Rattus norvegicus (Rat), this protein is Growth/differentiation factor 11 (Gdf11).